A 335-amino-acid polypeptide reads, in one-letter code: Probable cytosolic iron-sulfur protein assembly protein Ciao1 (335 aa).

7 WD repeats span residues 12 to 51 (GHKG…WGTK), 57 to 96 (GHKR…FECN), 101 to 140 (GHEN…EFEC), 146 to 185 (PHTQ…NDWD), 192 to 231 (SHTS…NTAG), 250 to 289 (QHSR…KPDE), and 301 to 335 (AHDQ…KVSE).

The protein belongs to the WD repeat CIA1 family.

In terms of biological role, essential component of the cytosolic iron-sulfur (Fe/S) protein assembly machinery. Required for the maturation of extramitochondrial Fe/S proteins. This chain is Probable cytosolic iron-sulfur protein assembly protein Ciao1, found in Drosophila sechellia (Fruit fly).